Here is a 329-residue protein sequence, read N- to C-terminus: Gut-specific cysteine proteinase (329 aa).

An N-terminal signal peptide occupies residues 1–15; that stretch reads MKFLILTALCAVTLA. Positions 16–84 are cleaved as a propeptide — activation peptide; that stretch reads FVPINHQSAV…ATEQEVVLAS (69 aa). 6 disulfide bridges follow: cysteine 98/cysteine 127, cysteine 110/cysteine 155, cysteine 146/cysteine 204, cysteine 147/cysteine 151, cysteine 183/cysteine 208, and cysteine 191/cysteine 196. Residue cysteine 113 is part of the active site. Active-site residues include histidine 275 and asparagine 295.

Belongs to the peptidase C1 family. In terms of tissue distribution, larvae exhibit strong expression in gut cells and weak expression in hypodermal cells. Adults exhibit the reverse: strong expression in hypodermal cells and weaker expression in gut cells.

Thiol protease. Has a role as a digestive enzyme. The sequence is that of Gut-specific cysteine proteinase (cpr-1) from Caenorhabditis elegans.